The sequence spans 226 residues: Small ribosomal subunit protein uS3 (226 aa).

A KH type-2 domain is found at 39–107 (IRKFIKNKLY…NILINITEIK (69 aa)).

This sequence belongs to the universal ribosomal protein uS3 family. Part of the 30S ribosomal subunit. Forms a tight complex with proteins S10 and S14.

In terms of biological role, binds the lower part of the 30S subunit head. Binds mRNA in the 70S ribosome, positioning it for translation. This Acetivibrio thermocellus (strain ATCC 27405 / DSM 1237 / JCM 9322 / NBRC 103400 / NCIMB 10682 / NRRL B-4536 / VPI 7372) (Clostridium thermocellum) protein is Small ribosomal subunit protein uS3.